A 276-amino-acid polypeptide reads, in one-letter code: METGRGLVELARPVNTLAAGALTFIGAFVAGGAVGRPAATGAAVGATWLATAGGNAINDYFDREVDRINDPDRAIPRGAVSPRGALAYSVVLFVGAAALAATLPVLAVCIAALNLAGLLTYTQYLKGRPGAGNALVAYLGGSTFVFGAAAVGSPLAGGVLAALAALSTFAREVIKDVEDLAGDRAAGLRTLPVVVGHQRALAVSAVFVVGAAAASPVPYLVGVFGWWYLVAVCPGVVVMVVAAARSYTDPAAGQRLLKRGQLLAAAAFVVGRLVTP.

The next 5 helical transmembrane spans lie at 14-34 (VNTL…GGAV), 90-110 (VVLF…AVCI), 144-164 (FVFG…AALA), 200-220 (ALAV…VPYL), and 221-241 (VGVF…VMVV).

This sequence belongs to the UbiA prenyltransferase family. DGGGP synthase subfamily. It depends on Mg(2+) as a cofactor.

It localises to the cell membrane. It carries out the reaction sn-3-O-(geranylgeranyl)glycerol 1-phosphate + (2E,6E,10E)-geranylgeranyl diphosphate = 2,3-bis-O-(geranylgeranyl)-sn-glycerol 1-phosphate + diphosphate. Its pathway is membrane lipid metabolism; glycerophospholipid metabolism. Prenyltransferase that catalyzes the transfer of the geranylgeranyl moiety of geranylgeranyl diphosphate (GGPP) to the C2 hydroxyl of (S)-3-O-geranylgeranylglyceryl phosphate (GGGP). This reaction is the second ether-bond-formation step in the biosynthesis of archaeal membrane lipids. This Halobacterium salinarum (strain ATCC 29341 / DSM 671 / R1) protein is Digeranylgeranylglyceryl phosphate synthase.